Consider the following 318-residue polypeptide: NADH-ubiquinone oxidoreductase chain 1 (318 aa).

Transmembrane regions (helical) follow at residues 2–22, 70–90, 100–120, 147–167, 171–191, 217–237, 254–276, and 294–314; these read FMIN…FLTL, MFII…IPLP, LGIL…LWSG, AIIL…TLII, YLWL…STLA, AGPF…MNIF, LYSI…IRAS, and LPLT…LSSI.

The protein belongs to the complex I subunit 1 family. As to quaternary structure, core subunit of respiratory chain NADH dehydrogenase (Complex I) which is composed of 45 different subunits.

The protein localises to the mitochondrion inner membrane. It catalyses the reaction a ubiquinone + NADH + 5 H(+)(in) = a ubiquinol + NAD(+) + 4 H(+)(out). Core subunit of the mitochondrial membrane respiratory chain NADH dehydrogenase (Complex I) which catalyzes electron transfer from NADH through the respiratory chain, using ubiquinone as an electron acceptor. Essential for the catalytic activity and assembly of complex I. This chain is NADH-ubiquinone oxidoreductase chain 1 (MT-ND1), found in Equus asinus (Donkey).